The chain runs to 76 residues: Sulfur carrier protein TusA (76 aa).

Catalysis depends on cysteine 14, which acts as the Cysteine persulfide intermediate.

The protein belongs to the sulfur carrier protein TusA family. In terms of assembly, interacts with IscS.

The protein resides in the cytoplasm. The protein operates within tRNA modification. Functionally, sulfur carrier protein involved in sulfur trafficking in the cell. Part of a sulfur-relay system required for 2-thiolation during synthesis of 2-thiouridine of the modified wobble base 5-methylaminomethyl-2-thiouridine (mnm(5)s(2)U) in tRNA. Interacts with IscS and stimulates its cysteine desulfurase activity. Accepts an activated sulfur from IscS, which is then transferred to TusD, and thus determines the direction of sulfur flow from IscS to 2-thiouridine formation. Also appears to be involved in sulfur transfer for the biosynthesis of molybdopterin. The polypeptide is Sulfur carrier protein TusA (Buchnera aphidicola subsp. Acyrthosiphon pisum (strain 5A)).